The following is a 442-amino-acid chain: 3-dehydroquinate synthase, chloroplastic (442 aa).

A chloroplast-targeting transit peptide spans Met1–Arg58. Ala59 carries the post-translational modification N-acetylalanine. NAD(+)-binding positions include Asn119, Asp150–Glu152, Lys155, Gly183–Asp188, Thr208–Thr209, Lys221, Lys230, and Thr248–Thr251. Glu263 provides a ligand contact to a divalent metal cation. Lys305 is an NAD(+) binding site. A divalent metal cation-binding residues include His326 and His343.

This sequence belongs to the sugar phosphate cyclases superfamily. Dehydroquinate synthase family. As to quaternary structure, homodimer. Requires a divalent metal cation as cofactor. The cofactor is NAD(+).

It is found in the plastid. The protein localises to the chloroplast. The enzyme catalyses 7-phospho-2-dehydro-3-deoxy-D-arabino-heptonate = 3-dehydroquinate + phosphate. The protein operates within metabolic intermediate biosynthesis; chorismate biosynthesis; chorismate from D-erythrose 4-phosphate and phosphoenolpyruvate: step 2/7. Its function is as follows. Catalyzes the second step in the shikimate pathway. This is 3-dehydroquinate synthase, chloroplastic (DHQS) from Arabidopsis thaliana (Mouse-ear cress).